The chain runs to 1134 residues: RNA-binding protein NAB6 (1134 aa).

The residue at position 2 (S2) is an N-acetylserine. Disordered stretches follow at residues 112 to 133, 151 to 173, and 464 to 491; these read RPVS…NTNN, RNNN…RNNS, and SVPS…SGIT. Composition is skewed to low complexity over residues 115–133 and 151–164; these read SNHN…NTNN and RNNN…HNNN. Phosphoserine is present on residues S464 and S467. Residues 471-489 show a composition bias toward low complexity; sequence GNNNDSNNNGNNNKSNMSG. Positions 653 to 726 constitute an RRM domain; the sequence is RTIYIGNINP…NMLRVGWGHY (74 aa). Disordered stretches follow at residues 918-959 and 1043-1092; these read LDAH…FGGL and NYRS…GSFA. The span at 1057-1081 shows a compositional bias: polar residues; it reads STLSYNHSKNNETPMQDIFTNGETA. Residues 1083–1092 are compositionally biased toward basic residues; that stretch reads NRKKKRGSFA.

It is found in the cytoplasm. Its function is as follows. RNA-binding protein that associates with mRNAs encoding cell wall proteins. The protein is RNA-binding protein NAB6 (NAB6) of Saccharomyces cerevisiae (strain ATCC 204508 / S288c) (Baker's yeast).